Consider the following 755-residue polypeptide: Polycomb protein SUZ12 (755 aa).

Disordered regions lie at residues 26–79 (KMGN…RRIS), 333–377 (NANG…SRRA), and 392–420 (AVGRETRNNSNKRRRGGAYGEDHPPSDDR). Residues 30–42 (KASSQAQKRSQSQ) are compositionally biased toward low complexity. 2 stretches are compositionally biased toward polar residues: residues 43-57 (TGDSATSRPATDGSG) and 349-359 (TQPNGTHNEGT). A compositionally biased stretch (basic and acidic residues) spans 411-420 (GEDHPPSDDR). Residues 436–458 (FACLICGAENERLSQLRAHYMCH) form a C2H2-type zinc finger. Residues 580–645 (IDDSWLLLKH…KADWLVSKRS (66 aa)) form a polycomb protein VEFS-Box region.

This sequence belongs to the VEFS (VRN2-EMF2-FIS2-SU(Z)12) family. Component of the polycomb repressive complex 2 (PRC2) that consists of four core subunits icluding EZH2, EED, SUZ12, and RBBP4, among which EZH2 is the catalytic subunit and which minimally requires EED and SUZ12 for catalysis.

It is found in the nucleus. Its function is as follows. Component of the of the Polycomb Repressive Complex 2 (PRC2), a histone H3 lysine methyltransferase responsible for generating mono-, di-, and tri-methylation on Lys27 (H3K27me1, H3K27me2 and H3K27me3). The tri-methylated form is known to be critical in gene repression, and its proper placement is essential in defining repression patterns during development. SUZ12 is not a catalytic subunit but is required for the complex regulation of histone H3 lysine methylation by EZH2. This Chaetomium thermophilum (strain DSM 1495 / CBS 144.50 / IMI 039719) (Thermochaetoides thermophila) protein is Polycomb protein SUZ12.